Here is a 306-residue protein sequence, read N- to C-terminus: Glutaminase (306 aa).

Residues Ser-64, Asn-115, Glu-159, Asn-166, Tyr-190, Tyr-242, and Val-260 each coordinate substrate.

It belongs to the glutaminase family. As to quaternary structure, homotetramer.

The catalysed reaction is L-glutamine + H2O = L-glutamate + NH4(+). This chain is Glutaminase, found in Aliivibrio salmonicida (strain LFI1238) (Vibrio salmonicida (strain LFI1238)).